The primary structure comprises 93 residues: Red pigment-concentrating hormone (93 aa).

The first 21 residues, 1–21 (MVRAVVATLLVVLVVASCVSA), serve as a signal peptide directing secretion. Glutamine 22 is modified (pyrrolidone carboxylic acid). At tryptophan 29 the chain carries Tryptophan amide. A propeptide spanning residues 33 to 93 (AAAGGEGTGM…VQCQDEEYLG (61 aa)) is cleaved from the precursor. The interval 34–56 (AAGGEGTGMHPPAGAVVPPPSSL) is disordered.

Belongs to the AKH/HRTH/RPCH family. In terms of tissue distribution, strongly expressed in the eyestalk and weakly in brain. Not expressed in other tissues tested.

The protein localises to the secreted. Functionally, this hormone adapts the animal to light backgrounds by stimulating concentration of the pigment of its red body-chromatophores. This is Red pigment-concentrating hormone from Penaeus monodon (Giant tiger prawn).